The primary structure comprises 180 residues: Translation initiation factor IF-3 (180 aa).

This sequence belongs to the IF-3 family. Monomer.

The protein resides in the cytoplasm. Its function is as follows. IF-3 binds to the 30S ribosomal subunit and shifts the equilibrium between 70S ribosomes and their 50S and 30S subunits in favor of the free subunits, thus enhancing the availability of 30S subunits on which protein synthesis initiation begins. This Hyphomonas neptunium (strain ATCC 15444) protein is Translation initiation factor IF-3.